The chain runs to 1921 residues: Disks large homolog 5 (1921 aa).

One can recognise a CARD domain in the interval 1–90 (MEPQRRELLA…HLLPILYLNG (90 aa)). Residues 116–143 (ESSSSLSSVGTTGKAPSPPPLLTEQQAN) form a disordered region. Positions 139-601 (EQQANDTVEN…KEARFRQLMA (463 aa)) form a coiled coil. A phosphoserine mark is found at Ser-264 and Ser-295. PDZ domains lie at 620 to 710 (VVEF…RRRK) and 705 to 796 (VVRR…LKVF). The interval 857–898 (ELGHSGGSSSFLHKPFSGSSSPVSPQACPSTSERSLNSFRSD) is disordered. The segment covering 873–898 (SGSSSPVSPQACPSTSERSLNSFRSD) has biased composition (polar residues). Ser-900 is subject to Phosphoserine. Residues 930-1121 (EVPLDKIDPE…RPKSAPSFRP (192 aa)) form a disordered region. Position 984 is a phosphothreonine (Thr-984). Ser-1000 carries the phosphoserine modification. Thr-1011 carries the phosphothreonine modification. Over residues 1017 to 1030 (RRSDSIKFQHRLET) the composition is skewed to basic and acidic residues. Ser-1021 bears the Phosphoserine mark. Residues 1045 to 1055 (TSPPSAPPPSM) are compositionally biased toward pro residues. Thr-1183 is subject to Phosphothreonine. 3 disordered regions span residues 1204–1227 (VLPC…SVQH), 1243–1266 (YSEM…SSSN), and 1280–1343 (PRYP…KDRP). Residue Ser-1209 is modified to Phosphoserine. Residues 1217 to 1227 (GSQSLSPSVQH) are compositionally biased toward polar residues. The span at 1252–1266 (SNSLPSSARLGSSSN) shows a compositional bias: low complexity. Ser-1263 carries the post-translational modification Phosphoserine. The segment covering 1292 to 1324 (GSLSHSECSTPPRSPLNIDTLSSCSQPQTTAST) has biased composition (polar residues). Ser-1334 is subject to Phosphoserine. A PDZ 3 domain is found at 1350–1429 (HVKVQKGSEP…TITILAQYNP (80 aa)). Composition is skewed to polar residues over residues 1434 to 1443 (LNSHSRSSSH), 1450 to 1460 (PHSTLQGSSAG), and 1483 to 1495 (AKQS…SVGD). The interval 1434–1501 (LNSHSRSSSH…SVGDTTKKTP (68 aa)) is disordered. The PDZ 4 domain occupies 1504–1585 (RIVFIKKSQL…SLRLKVQYRH (82 aa)). The region spanning 1596–1664 (GDSFYIRALY…PSKYVMDQEF (69 aa)) is the SH3 domain. A Phosphoserine modification is found at Ser-1669. The Guanylate kinase-like domain occupies 1724–1907 (DSVSLAYQRV…ICTQILAMVS (184 aa)).

The protein belongs to the MAGUK family. In terms of assembly, interacts with MPP1. Interacts with CTNNB1 and with the third SH3 domain of SORBS3 to form a ternary complex. Interacts (via coiled-coil domain) with MARK3. Interacts (via PDZ domain 3) with STK3/MST2 and STK4/MST1. Interacts with SCRIB. Interacts with CTNB1. Interacts with SMO and (via PDZ4 or guanylate kinase-like domain) with KIF7. As to expression, brain (at protein level).

Its subcellular location is the cell junction. The protein resides in the cell membrane. It is found in the postsynaptic density. It localises to the cytoplasm. The protein localises to the cytoskeleton. Its subcellular location is the cilium basal body. Its function is as follows. Acts as a regulator of the Hippo signaling pathway. Negatively regulates the Hippo signaling pathway by mediating the interaction of MARK3 with STK3/4, bringing them together to promote MARK3-dependent hyperphosphorylation and inactivation of STK3 kinase activity toward LATS1. Positively regulates the Hippo signaling by mediating the interaction of SCRIB with STK4/MST1 and LATS1 which is important for the activation of the Hippo signaling pathway. Involved in regulating cell proliferation, maintenance of epithelial polarity, epithelial-mesenchymal transition (EMT), cell migration and invasion. Plays an important role in dendritic spine formation and synaptogenesis in cortical neurons; regulates synaptogenesis by enhancing the cell surface localization of N-cadherin. Acts as a positive regulator of hedgehog (Hh) signaling pathway. Plays a critical role in the early point of the SMO activity cycle by interacting with SMO at the ciliary base to induce the accumulation of KIF7 and GLI2 at the ciliary tip for GLI2 activation. This is Disks large homolog 5 (Dlg5) from Mus musculus (Mouse).